We begin with the raw amino-acid sequence, 502 residues long: ATP synthase subunit beta (502 aa).

156–163 (GGAGVGKT) contributes to the ATP binding site.

It belongs to the ATPase alpha/beta chains family. In terms of assembly, F-type ATPases have 2 components, CF(1) - the catalytic core - and CF(0) - the membrane proton channel. CF(1) has five subunits: alpha(3), beta(3), gamma(1), delta(1), epsilon(1). CF(0) has three main subunits: a(1), b(2) and c(9-12). The alpha and beta chains form an alternating ring which encloses part of the gamma chain. CF(1) is attached to CF(0) by a central stalk formed by the gamma and epsilon chains, while a peripheral stalk is formed by the delta and b chains.

It is found in the cell membrane. The enzyme catalyses ATP + H2O + 4 H(+)(in) = ADP + phosphate + 5 H(+)(out). In terms of biological role, produces ATP from ADP in the presence of a proton gradient across the membrane. The catalytic sites are hosted primarily by the beta subunits. In Cellulophaga lytica (Cytophaga lytica), this protein is ATP synthase subunit beta.